Reading from the N-terminus, the 573-residue chain is Urease subunit alpha (573 aa).

Positions 136-573 (GAIDCHVHLI…LPMAQRYFLF (438 aa)) constitute a Urease domain. Ni(2+)-binding residues include histidine 141, histidine 143, and lysine 224. The residue at position 224 (lysine 224) is an N6-carboxylysine. Histidine 226 contacts substrate. Residues histidine 253 and histidine 279 each contribute to the Ni(2+) site. The active-site Proton donor is the histidine 327. Aspartate 367 is a binding site for Ni(2+).

The protein belongs to the metallo-dependent hydrolases superfamily. Urease alpha subunit family. As to quaternary structure, heterotrimer of UreA (gamma), UreB (beta) and UreC (alpha) subunits. Three heterotrimers associate to form the active enzyme. Ni cation serves as cofactor. Post-translationally, carboxylation allows a single lysine to coordinate two nickel ions.

Its subcellular location is the cytoplasm. The enzyme catalyses urea + 2 H2O + H(+) = hydrogencarbonate + 2 NH4(+). It functions in the pathway nitrogen metabolism; urea degradation; CO(2) and NH(3) from urea (urease route): step 1/1. The protein is Urease subunit alpha of Mycobacterium sp. (strain JLS).